Reading from the N-terminus, the 3637-residue chain is Replicase polyprotein 1ab (3637 aa).

The C4-type; atypical zinc finger occupies 8–28 (CLCTPNARVFWERGQVYCTRC). The Peptidase C31 domain maps to 69 to 181 (ECRPGGMCWL…KGLCPFADAR (113 aa)). Residues 69–183 (ECRPGGMCWL…LCPFADARAN (115 aa)) form a PCP1-alpha region. Catalysis depends on for Nsp1-alpha papain-like cysteine proteinase activity residues C76 and H147. Positions 262-380 (RDTKFSKCWE…KFRFQTRKYY (119 aa)) are PCP1-beta. In terms of domain architecture, Peptidase C32 spans 262 to 381 (RDTKFSKCWE…FRFQTRKYYG (120 aa)). Residues C269 and H340 each act as for Nsp1-beta papain-like cysteine proteinase activity in the active site. A Peptidase C33 domain is found at 381-486 (GYSPPGDGAC…RGVCGECEMG (106 aa)). Active-site for Nsp2 cysteine proteinase activity residues include C390 and H456. Disordered regions lie at residues 676–743 (CKPK…AALK) and 865–899 (QQKTSGGCGEREFKDVGRKSGAERTPSKRDLGVSL). The segment covering 678–689 (PKRKRSRKKKTR) has biased composition (basic residues). 2 stretches are compositionally biased toward basic and acidic residues: residues 714–727 (DTRETCASEKKAEK) and 873–895 (GEREFKDVGRKSGAERTPSKRDL). The next 7 membrane-spanning stretches (helical) occupy residues 940–960 (WLNHQVFVLSSHLLAVWSFIF), 981–1001 (VLLCFYLPAIGFMTLVGCVFG), 1083–1103 (FYFLRLMVLLDLGLVFLAVAL), 1287–1307 (IADFVCLGLYVLLNFLLSAWL), 1362–1382 (ALMVAIMATVAIFFAKISLLV), 1390–1410 (CLLMYAFPSLSIAAFGFPFVL), and 1423–1443 (VQFFLLAVNVWAGVASVVVLI). Residues 979–1103 (CCVLLCFYLP…LGLVFLAVAL (125 aa)) form an HD1 region. An HD2 region spans residues 1287-1446 (IADFVCLGLY…ASVVVLISSW (160 aa)). The 202-residue stretch at 1511–1712 (GSLRTRGCAK…AVVESLPALE (202 aa)) folds into the Peptidase S32 domain. Active-site charge relay system; for 3C-like serine proteinase activity residues include H1549, D1574, and S1626. The next 5 helical transmembrane spans lie at 1735–1755 (DVPVIRIAFFFLNEILPVMLA), 1761–1781 (FALSLFFCVHWLFCSSVAVAF), 1801–1821 (LVIAALNRPCGPFGFSLLGQL), 1824–1844 (CCLMLCLLDIELQLLGCLYLG), and 1853–1873 (EIFFHPTGQFMFLPLFLSLFK). Residues 1735–1872 (DVPVIRIAFF…MFLPLFLSLF (138 aa)) form an HD3 region. In terms of domain architecture, NiRAN spans 2214–2372 (SLNGLQQASA…LPYKLHPVRG (159 aa)). The region spanning 2611–2745 (GRCLEADLAS…YDESSELPNY (135 aa)) is the RdRp catalytic domain. One can recognise an AV ZBD domain in the interval 2865–2928 (KKKCRTCAHC…SPVMSLNTEL (64 aa)). The Zn(2+) site is built by C2871, C2874, C2884, C2889, H2892, H2894, H2896, H2898, C2905, H2907, C2914, and C2917. The 153-residue stretch at 2985-3137 (QVMKVAQTCA…AFALMLGRQL (153 aa)) folds into the (+)RNA virus helicase ATP-binding domain. Residue 3013 to 3020 (GAPGTGKT) coordinates ATP. A (+)RNA virus helicase C-terminal domain is found at 3138–3269 (IEVFRFGPSI…CGEQPMMISE (132 aa)). Residues 3293-3389 (EGTASPLPQV…LTKFLKGKPV (97 aa)) form the AV-Nsp11N/CoV-Nsp15M domain. Residues 3391 to 3513 (LPDSLMSTGR…MVWKDATAYF (123 aa)) enclose the NendoU domain. Residues H3422, H3437, and K3466 contribute to the active site.

Belongs to the arteriviridae polyprotein family. Post-translationally, specific enzymatic cleavages in vivo by its own proteases yield mature proteins. There are two alternative pathways for processing. Either nsp4-5 is cleaved, which represents the major pathway or the nsp5-6 and nsp6-7 are processed, which represents the minor pathway. The major pathway occurs when nsp2 acts as a cofactor for nsp4.

It localises to the host membrane. Its subcellular location is the host cytoplasm. The protein resides in the host perinuclear region. The enzyme catalyses RNA(n) + a ribonucleoside 5'-triphosphate = RNA(n+1) + diphosphate. It catalyses the reaction ATP + H2O = ADP + phosphate + H(+). The catalysed reaction is uridylyl-uridylyl-ribonucleotide-RNA = a 3'-end uridylyl-2',3'-cyclophospho-uridine-RNA + a 5'-end dephospho-ribonucleoside-RNA. Functionally, the replicase polyprotein 1ab is a multifunctional protein: it contains the activities necessary for the transcription of negative stranded RNA, leader RNA, subgenomic mRNAs and progeny virion RNA as well as proteinases responsible for the cleavage of the polyprotein into functional products. Its function is as follows. The Nsp1 chain is essential for viral subgenomic mRNA synthesis. In terms of biological role, the 3C-like serine proteinase chain is responsible for the majority of cleavages as it cleaves the C-terminus of the polyprotein. The helicase chain, which contains a zinc finger structure, displays RNA and DNA duplex-unwinding activities with 5' to 3' polarity. Functionally, plays a role in viral transcription/replication and prevents the simultaneous activation of host cell dsRNA sensors, such as MDA5/IFIH1, OAS, and PKR. Acts by degrading the 5'-polyuridines generated during replication of the poly(A) region of viral genomic and subgenomic RNAs. Catalyzes a two-step reaction in which a 2'3'-cyclic phosphate (2'3'-cP) is first generated by 2'-O transesterification, which is then hydrolyzed to a 3'-phosphate (3'-P). If not degraded, poly(U) RNA would hybridize with poly(A) RNA tails and activate host dsRNA sensors. This Mus musculus domesticus (western European house mouse) protein is Replicase polyprotein 1ab (rep).